The sequence spans 445 residues: Argininosuccinate synthase (445 aa).

ATP contacts are provided by residues 17–25 (AFSGGLDTS) and Ala43. Tyr99 contributes to the L-citrulline binding site. Residues Gly129 and Thr131 each contribute to the ATP site. L-aspartate contacts are provided by Thr131, Asn135, and Asp136. Asn135 contributes to the L-citrulline binding site. Asp136 serves as a coordination point for ATP. 2 residues coordinate L-citrulline: Arg139 and Ser192. Asp194 contributes to the ATP binding site. Thr201, Glu203, and Glu280 together coordinate L-citrulline.

Belongs to the argininosuccinate synthase family. Type 2 subfamily. Homotetramer.

It is found in the cytoplasm. It catalyses the reaction L-citrulline + L-aspartate + ATP = 2-(N(omega)-L-arginino)succinate + AMP + diphosphate + H(+). The protein operates within amino-acid biosynthesis; L-arginine biosynthesis; L-arginine from L-ornithine and carbamoyl phosphate: step 2/3. This is Argininosuccinate synthase (argG) from Bradyrhizobium diazoefficiens (strain JCM 10833 / BCRC 13528 / IAM 13628 / NBRC 14792 / USDA 110).